A 104-amino-acid polypeptide reads, in one-letter code: Large ribosomal subunit protein uL24 (104 aa).

Belongs to the universal ribosomal protein uL24 family. In terms of assembly, part of the 50S ribosomal subunit.

One of two assembly initiator proteins, it binds directly to the 5'-end of the 23S rRNA, where it nucleates assembly of the 50S subunit. Functionally, one of the proteins that surrounds the polypeptide exit tunnel on the outside of the subunit. The chain is Large ribosomal subunit protein uL24 from Buchnera aphidicola subsp. Schizaphis graminum (strain Sg).